Here is a 124-residue protein sequence, read N- to C-terminus: UPF0299 membrane protein VIBHAR_02118 (124 aa).

4 helical membrane-spanning segments follow: residues 6–26 (LLQLVHLLISLALIMGALGIG), 35–55 (VSVPGSVIGMLVLFFSMTLGL), 72–92 (MILLFVPISVGLMQHFDMLLA), and 95–115 (LPIIASAVGGSLIVLISLAWF).

This sequence belongs to the UPF0299 family.

Its subcellular location is the cell inner membrane. The sequence is that of UPF0299 membrane protein VIBHAR_02118 from Vibrio campbellii (strain ATCC BAA-1116).